Here is a 516-residue protein sequence, read N- to C-terminus: Maturase K (516 aa).

It belongs to the intron maturase 2 family. MatK subfamily.

The protein resides in the plastid. The protein localises to the chloroplast. Functionally, usually encoded in the trnK tRNA gene intron. Probably assists in splicing its own and other chloroplast group II introns. The polypeptide is Maturase K (Medeola virginiana (Indian cucumber root)).